The following is a 604-amino-acid chain: Asparagine synthetase [glutamine-hydrolyzing] 1 (604 aa).

The active-site Nucleophile is C2. Positions 2–186 (CGILAVLGAA…PGHLYSSAAG (185 aa)) constitute a Glutamine amidotransferase type-2 domain. Residues 50 to 54 (RLAIV), 75 to 77 (NGE), and D99 contribute to the L-glutamine site. The Asparagine synthetase domain occupies 211–451 (LREAFEKAVI…LPKHILYRQK (241 aa)). ATP is bound by residues L232, V268, and 342–343 (SG).

The enzyme catalyses L-aspartate + L-glutamine + ATP + H2O = L-asparagine + L-glutamate + AMP + diphosphate + H(+). It participates in amino-acid biosynthesis; L-asparagine biosynthesis. Functionally, essential for nitrogen assimilation, distribution and remobilization within the plant via the phloem. This chain is Asparagine synthetase [glutamine-hydrolyzing] 1, found in Oryza sativa subsp. japonica (Rice).